The sequence spans 607 residues: uncharacterized protein (607 aa).

The zn(2)-C6 fungal-type DNA-binding region spans 16–44; sequence CTVCRKRKLKCDGNKPCGRCIRLNTPKEC.

It is found in the nucleus. This is an uncharacterized protein from Saccharomyces cerevisiae (strain ATCC 204508 / S288c) (Baker's yeast).